The following is a 274-amino-acid chain: Bis(5'-nucleosyl)-tetraphosphatase, symmetrical (274 aa).

Belongs to the Ap4A hydrolase family.

It carries out the reaction P(1),P(4)-bis(5'-adenosyl) tetraphosphate + H2O = 2 ADP + 2 H(+). Functionally, hydrolyzes diadenosine 5',5'''-P1,P4-tetraphosphate to yield ADP. The protein is Bis(5'-nucleosyl)-tetraphosphatase, symmetrical of Shewanella baltica (strain OS223).